A 249-amino-acid polypeptide reads, in one-letter code: Coproheme decarboxylase (249 aa).

Residues arginine 131, tyrosine 145 to lysine 149, histidine 172, glutamine 185, and serine 223 each bind Fe-coproporphyrin III. Tyrosine 145 is a catalytic residue.

This sequence belongs to the ChdC family. Type 1 subfamily. Requires Fe-coproporphyrin III as cofactor.

It carries out the reaction Fe-coproporphyrin III + 2 H2O2 + 2 H(+) = heme b + 2 CO2 + 4 H2O. It catalyses the reaction Fe-coproporphyrin III + H2O2 + H(+) = harderoheme III + CO2 + 2 H2O. The catalysed reaction is harderoheme III + H2O2 + H(+) = heme b + CO2 + 2 H2O. It participates in porphyrin-containing compound metabolism; protoheme biosynthesis. In terms of biological role, involved in coproporphyrin-dependent heme b biosynthesis. Catalyzes the decarboxylation of Fe-coproporphyrin III (coproheme) to heme b (protoheme IX), the last step of the pathway. The reaction occurs in a stepwise manner with a three-propionate intermediate. The sequence is that of Coproheme decarboxylase from Shouchella clausii (strain KSM-K16) (Alkalihalobacillus clausii).